The chain runs to 600 residues: Tripeptidyl-peptidase 1 (600 aa).

A signal peptide spans 1–22; the sequence is MNIKFNLIIIILFILFISNVNC. A propeptide spans 23 to 220 (removed in mature form); the sequence is KKIKNKKHLT…GGGGKVNGIG (198 aa). N-linked (GlcNAc...) asparagine glycans are attached at residues N91, N259, and N266. The region spanning 248 to 600 is the Peptidase S53 domain; sequence YLSPDLIRKE…FDELVKYCLE (353 aa). Residues E318 and D322 each act as charge relay system in the active site. An intrachain disulfide couples C411 to C570. N475 and N483 each carry an N-linked (GlcNAc...) asparagine glycan. Catalysis depends on S514, which acts as the Charge relay system. D559, I560, G579, and D581 together coordinate Ca(2+).

Monomer. The cofactor is Ca(2+). Activated by autocatalytic proteolytical processing upon acidification. N-glycosylation is required for processing and activity.

It localises to the secreted. It catalyses the reaction Release of an N-terminal tripeptide from a polypeptide, but also has endopeptidase activity.. Serine protease with tripeptidyl-peptidase I activity. This is Tripeptidyl-peptidase 1 (tpp1) from Dictyostelium discoideum (Social amoeba).